A 145-amino-acid chain; its full sequence is Leptin (145 aa).

Residues C95 and C145 are joined by a disulfide bond.

The protein belongs to the leptin family.

It localises to the secreted. In terms of biological role, key player in the regulation of energy balance and body weight control. Once released into the circulation, has central and peripheral effects by binding LEPR, found in many tissues, which results in the activation of several major signaling pathways. The sequence is that of Leptin (LEP) from Meleagris gallopavo (Wild turkey).